We begin with the raw amino-acid sequence, 489 residues long: Glycogen synthase (489 aa).

Lys-18 contributes to the ADP-alpha-D-glucose binding site.

It belongs to the glycosyltransferase 1 family. Bacterial/plant glycogen synthase subfamily.

The enzyme catalyses [(1-&gt;4)-alpha-D-glucosyl](n) + ADP-alpha-D-glucose = [(1-&gt;4)-alpha-D-glucosyl](n+1) + ADP + H(+). The protein operates within glycan biosynthesis; glycogen biosynthesis. Synthesizes alpha-1,4-glucan chains using ADP-glucose. This is Glycogen synthase from Rhodopseudomonas palustris (strain BisA53).